Reading from the N-terminus, the 214-residue chain is Orotate phosphoribosyltransferase (214 aa).

Lys26 lines the 5-phospho-alpha-D-ribose 1-diphosphate pocket. 34 to 35 (FF) contacts orotate. Residues 72-73 (YK), Arg99, Lys100, Lys103, His105, and 124-132 (DDVITAGTA) contribute to the 5-phospho-alpha-D-ribose 1-diphosphate site. Positions 128 and 157 each coordinate orotate.

It belongs to the purine/pyrimidine phosphoribosyltransferase family. PyrE subfamily. Homodimer. Requires Mg(2+) as cofactor.

The enzyme catalyses orotidine 5'-phosphate + diphosphate = orotate + 5-phospho-alpha-D-ribose 1-diphosphate. It participates in pyrimidine metabolism; UMP biosynthesis via de novo pathway; UMP from orotate: step 1/2. Catalyzes the transfer of a ribosyl phosphate group from 5-phosphoribose 1-diphosphate to orotate, leading to the formation of orotidine monophosphate (OMP). This is Orotate phosphoribosyltransferase from Pseudomonas fluorescens (strain ATCC BAA-477 / NRRL B-23932 / Pf-5).